Reading from the N-terminus, the 248-residue chain is Large ribosomal subunit protein uL4 (248 aa).

The interval 69 to 92 (HVPRLKNGSRAAKVPQAKGGREAH) is disordered.

This sequence belongs to the universal ribosomal protein uL4 family. Part of the 50S ribosomal subunit.

In terms of biological role, one of the primary rRNA binding proteins, this protein initially binds near the 5'-end of the 23S rRNA. It is important during the early stages of 50S assembly. It makes multiple contacts with different domains of the 23S rRNA in the assembled 50S subunit and ribosome. Forms part of the polypeptide exit tunnel. The sequence is that of Large ribosomal subunit protein uL4 from Methanoregula boonei (strain DSM 21154 / JCM 14090 / 6A8).